Here is a 34-residue protein sequence, read N- to C-terminus: Potassium channel toxin alpha-KTx 6 hetlaxin (34 aa).

4 cysteine pairs are disulfide-bonded: cysteine 3/cysteine 24, cysteine 9/cysteine 29, cysteine 13/cysteine 31, and cysteine 19/cysteine 34. The residue at position 34 (cysteine 34) is a Cysteine amide.

Contains 4 disulfide bonds. Expressed by the venom gland.

It localises to the secreted. Its function is as follows. Binds to voltage-gated potassium channels Kv1.3/KCNA3 (IC(50)=0.48 uM) and Kv1.1/KCNA1 (IC(50)=6.7 uM) and inhibits channel activity. The chain is Potassium channel toxin alpha-KTx 6 hetlaxin from Heterometrus laoticus (Thai giant scorpion).